The chain runs to 356 residues: Nicotinate-nucleotide--dimethylbenzimidazole phosphoribosyltransferase (356 aa).

Glu-317 (proton acceptor) is an active-site residue.

Belongs to the CobT family. In terms of assembly, homodimer.

It carries out the reaction 5,6-dimethylbenzimidazole + nicotinate beta-D-ribonucleotide = alpha-ribazole 5'-phosphate + nicotinate + H(+). It functions in the pathway nucleoside biosynthesis; alpha-ribazole biosynthesis; alpha-ribazole from 5,6-dimethylbenzimidazole: step 1/2. Functionally, catalyzes the synthesis of alpha-ribazole-5'-phosphate from nicotinate mononucleotide (NAMN) and 5,6-dimethylbenzimidazole (DMB). The polypeptide is Nicotinate-nucleotide--dimethylbenzimidazole phosphoribosyltransferase (Salmonella agona (strain SL483)).